A 206-amino-acid polypeptide reads, in one-letter code: MSNLKPDVEHCTGAGTGSPLEEEVRTLFVSGLPVDIKPRELYLLFRPFKGYEGSLIKLTSRQPVGFVIFDSRAGAEAAKNALNGIRFDPENPQTLRLEFAKANTKMAKSKLIATPNPTSVHPALGAHLIARDPYDLMGTALIPASPEAWAPYPLYTTELTPAISHTTFTYPAATAAAAAAATLHAQVRWYPSSDTTQQGWKYRQFC.

Position 2 is an N-acetylserine (Ser2). In terms of domain architecture, RRM spans 25 to 102; it reads RTLFVSGLPV…QTLRLEFAKA (78 aa). The segment at 35–45 is important for homodimerization; the sequence is DIKPRELYLLF.

In terms of assembly, homodimer. Interacts with EEF2.

The protein localises to the cytoplasm. It localises to the nucleus. It is found in the stress granule. Its function is as follows. RNA-binding protein involved in the regulation of smooth muscle cell differentiation and proliferation in the gastrointestinal system. Binds NOG mRNA, the major inhibitor of the bone morphogenetic protein (BMP) pathway. Mediates an increase of NOG mRNA levels, thereby contributing to the negative regulation of BMP signaling pathway and promoting reversible dedifferentiation and proliferation of smooth muscle cells. Acts as a pre-mRNA alternative splicing regulator. Mediates ACTN1 and FLNB alternative splicing. Likely binds to mRNA tandem CAC trinucleotide or CA dinucleotide motifs. The chain is RNA-binding protein with multiple splicing 2 (Rbpms2) from Mus musculus (Mouse).